The primary structure comprises 408 residues: Arginine biosynthesis bifunctional protein ArgJ (408 aa).

6 residues coordinate substrate: Thr-158, Lys-184, Thr-195, Glu-281, Asn-403, and Thr-408. Thr-195 (nucleophile) is an active-site residue.

Belongs to the ArgJ family. In terms of assembly, heterotetramer of two alpha and two beta chains.

The protein resides in the cytoplasm. The enzyme catalyses N(2)-acetyl-L-ornithine + L-glutamate = N-acetyl-L-glutamate + L-ornithine. It catalyses the reaction L-glutamate + acetyl-CoA = N-acetyl-L-glutamate + CoA + H(+). It participates in amino-acid biosynthesis; L-arginine biosynthesis; L-ornithine and N-acetyl-L-glutamate from L-glutamate and N(2)-acetyl-L-ornithine (cyclic): step 1/1. It functions in the pathway amino-acid biosynthesis; L-arginine biosynthesis; N(2)-acetyl-L-ornithine from L-glutamate: step 1/4. Its function is as follows. Catalyzes two activities which are involved in the cyclic version of arginine biosynthesis: the synthesis of N-acetylglutamate from glutamate and acetyl-CoA as the acetyl donor, and of ornithine by transacetylation between N(2)-acetylornithine and glutamate. This Shouchella clausii (strain KSM-K16) (Alkalihalobacillus clausii) protein is Arginine biosynthesis bifunctional protein ArgJ.